We begin with the raw amino-acid sequence, 224 residues long: UPF0758 protein PSPA7_6095 (224 aa).

An MPN domain is found at valine 102–methionine 224. Residues histidine 173, histidine 175, and aspartate 186 each contribute to the Zn(2+) site. The JAMM motif motif lies at histidine 173–aspartate 186.

Belongs to the UPF0758 family.

This Pseudomonas paraeruginosa (strain DSM 24068 / PA7) (Pseudomonas aeruginosa (strain PA7)) protein is UPF0758 protein PSPA7_6095.